The following is a 324-amino-acid chain: Glyoxylate/hydroxypyruvate reductase B (324 aa).

Active-site residues include R237 and E266. Catalysis depends on H285, which acts as the Proton donor.

This sequence belongs to the D-isomer specific 2-hydroxyacid dehydrogenase family. GhrB subfamily. As to quaternary structure, homodimer.

It is found in the cytoplasm. It catalyses the reaction glycolate + NADP(+) = glyoxylate + NADPH + H(+). The enzyme catalyses (R)-glycerate + NAD(+) = 3-hydroxypyruvate + NADH + H(+). The catalysed reaction is (R)-glycerate + NADP(+) = 3-hydroxypyruvate + NADPH + H(+). Catalyzes the NADPH-dependent reduction of glyoxylate and hydroxypyruvate into glycolate and glycerate, respectively. This chain is Glyoxylate/hydroxypyruvate reductase B, found in Escherichia coli (strain SMS-3-5 / SECEC).